Reading from the N-terminus, the 110-residue chain is UPF0122 protein SMU_1061 (110 aa).

Belongs to the UPF0122 family.

Functionally, might take part in the signal recognition particle (SRP) pathway. This is inferred from the conservation of its genetic proximity to ftsY/ffh. May be a regulatory protein. The sequence is that of UPF0122 protein SMU_1061 (ylxM) from Streptococcus mutans serotype c (strain ATCC 700610 / UA159).